Consider the following 642-residue polypeptide: Chaperone protein DnaK (642 aa).

T200 carries the post-translational modification Phosphothreonine; by autocatalysis. Residues 603-623 show a composition bias toward low complexity; it reads AAAAEQGGNADAASGNAQASK. Positions 603–627 are disordered; the sequence is AAAAEQGGNADAASGNAQASKAADD.

This sequence belongs to the heat shock protein 70 family.

In terms of biological role, acts as a chaperone. The polypeptide is Chaperone protein DnaK (Xanthomonas campestris pv. campestris (strain B100)).